Here is a 549-residue protein sequence, read N- to C-terminus: Membrane protein insertase YidC (549 aa).

The chain crosses the membrane as a helical span at residues 6-26 (NLLLIGLLLVSFMLWQSWMVD). The disordered stretch occupies residues 35–55 (ATAESSVPASSGGDVPNQNDA). 4 consecutive transmembrane segments (helical) span residues 349–369 (QFLH…TMIV), 424–444 (LGGC…YWTL), 462–482 (LSVK…MWYI), and 503–523 (PIVF…YWVV).

This sequence belongs to the OXA1/ALB3/YidC family. Type 1 subfamily. Interacts with the Sec translocase complex via SecD. Specifically interacts with transmembrane segments of nascent integral membrane proteins during membrane integration.

Its subcellular location is the cell inner membrane. Functionally, required for the insertion and/or proper folding and/or complex formation of integral membrane proteins into the membrane. Involved in integration of membrane proteins that insert both dependently and independently of the Sec translocase complex, as well as at least some lipoproteins. Aids folding of multispanning membrane proteins. This Tolumonas auensis (strain DSM 9187 / NBRC 110442 / TA 4) protein is Membrane protein insertase YidC.